Reading from the N-terminus, the 484-residue chain is MKFFPTRTLLCLCIAAPCLPAIAQNDPIELPDIGTVAGSTLTIDQELIYGDAYMRMLRNNQPVINDPVLNEYIDNLGHRLVASANDVKTPFTFFMIRDRNINAFAFFGGYVALHSGLFLHAQSESELASVMAHEIAHVTQRHLARSMEEQARRSPATIAALAGSLLLAIAAPEAGIAAINATMAGSIQGQINYTRSNEKEADRFGIATLAKAGFDANAMPQFFTRLADEYRYASKPPPMLLTHPLPEDRITDSRERARQYPPLKLAPHLDYHLARARIIARYAGIDADAALDWFARSEKKIDATLQPSIQYGKALVYLDLKQFDKAEPLLTQLVKEQPDNHFYLDAISDLYIELKQADKAQSLLEKALKQTPNNSVLTINYANVLLKQDKFTDAIRILQRYTHDNPNDINGWQLLSEANSRLGNSAEDLAARGEIMALQANWNKAIQFYTQASQLVELGSLAQARYDARIDQLMVQRERFLSLQ.

Positions 1-23 are cleaved as a signal peptide; sequence MKFFPTRTLLCLCIAAPCLPAIA. Position 133 (His133) interacts with Zn(2+). Residue Glu134 is part of the active site. The Zn(2+) site is built by His137 and Glu198. Catalysis depends on Asp202, which acts as the Proton donor. 4 TPR repeats span residues 307 to 340, 341 to 374, 376 to 408, and 426 to 459; these read PSIQ…QPDN, HFYL…TPNN, VLTI…NPND, and AEDL…VELG.

Belongs to the peptidase M48 family. BepA subfamily. It depends on Zn(2+) as a cofactor.

Its subcellular location is the periplasm. Its function is as follows. Functions both as a chaperone and a metalloprotease. Maintains the integrity of the outer membrane by promoting either the assembly or the elimination of outer membrane proteins, depending on their folding state. The sequence is that of Putative beta-barrel assembly-enhancing protease from Vibrio cholerae serotype O1 (strain ATCC 39315 / El Tor Inaba N16961).